The sequence spans 355 residues: Tetraacyldisaccharide 4'-kinase (355 aa).

An ATP-binding site is contributed by 48-55 (SVGGTGKT).

The protein belongs to the LpxK family.

The catalysed reaction is a lipid A disaccharide + ATP = a lipid IVA + ADP + H(+). Its pathway is glycolipid biosynthesis; lipid IV(A) biosynthesis; lipid IV(A) from (3R)-3-hydroxytetradecanoyl-[acyl-carrier-protein] and UDP-N-acetyl-alpha-D-glucosamine: step 6/6. Functionally, transfers the gamma-phosphate of ATP to the 4'-position of a tetraacyldisaccharide 1-phosphate intermediate (termed DS-1-P) to form tetraacyldisaccharide 1,4'-bis-phosphate (lipid IVA). The chain is Tetraacyldisaccharide 4'-kinase from Pelodictyon phaeoclathratiforme (strain DSM 5477 / BU-1).